The chain runs to 488 residues: 1-aminocyclopropane-1-carboxylate synthase-like protein 1 (488 aa).

Position 273 is an N6-(pyridoxal phosphate)lysine (K273).

The protein belongs to the class-I pyridoxal-phosphate-dependent aminotransferase family. Homodimer. In terms of tissue distribution, expressed in young leaves and flowers. Not expressed in roots.

The protein is 1-aminocyclopropane-1-carboxylate synthase-like protein 1 (ACS1) of Arabidopsis thaliana (Mouse-ear cress).